A 430-amino-acid chain; its full sequence is Serine--tRNA ligase (430 aa).

235–237 contacts L-serine; sequence TSE. 266–268 lines the ATP pocket; the sequence is RSE. E289 lines the L-serine pocket. 353 to 356 serves as a coordination point for ATP; sequence EISS. S388 provides a ligand contact to L-serine.

The protein belongs to the class-II aminoacyl-tRNA synthetase family. Type-1 seryl-tRNA synthetase subfamily. Homodimer. The tRNA molecule binds across the dimer.

It localises to the cytoplasm. The enzyme catalyses tRNA(Ser) + L-serine + ATP = L-seryl-tRNA(Ser) + AMP + diphosphate + H(+). It carries out the reaction tRNA(Sec) + L-serine + ATP = L-seryl-tRNA(Sec) + AMP + diphosphate + H(+). Its pathway is aminoacyl-tRNA biosynthesis; selenocysteinyl-tRNA(Sec) biosynthesis; L-seryl-tRNA(Sec) from L-serine and tRNA(Sec): step 1/1. Functionally, catalyzes the attachment of serine to tRNA(Ser). Is also able to aminoacylate tRNA(Sec) with serine, to form the misacylated tRNA L-seryl-tRNA(Sec), which will be further converted into selenocysteinyl-tRNA(Sec). The chain is Serine--tRNA ligase from Azoarcus sp. (strain BH72).